A 638-amino-acid polypeptide reads, in one-letter code: UvrABC system protein C (638 aa).

Residues 20–97 (ECAGVYQMFD…IKKFQPKFNI (78 aa)) form the GIY-YIG domain. The UVR domain occupies 209–244 (KELQENLSKKMEELSSHMYFEEAAEIRDRIKALSYV).

This sequence belongs to the UvrC family. As to quaternary structure, interacts with UvrB in an incision complex.

The protein resides in the cytoplasm. Functionally, the UvrABC repair system catalyzes the recognition and processing of DNA lesions. UvrC both incises the 5' and 3' sides of the lesion. The N-terminal half is responsible for the 3' incision and the C-terminal half is responsible for the 5' incision. The polypeptide is UvrABC system protein C (Rickettsia canadensis (strain McKiel)).